The primary structure comprises 473 residues: Inactive pancreatic lipase-related protein 1 (473 aa).

An N-terminal signal peptide occupies residues 1–17 (MLILWTIPLFLLGAAQG). Disulfide bonds link Cys-21–Cys-27 and Cys-109–Cys-120. Catalysis depends on Ser-171, which acts as the Nucleophile. The active-site Charge relay system is the Asp-194. The Ca(2+) site is built by Glu-205, Arg-208, Asp-210, and Asp-213. A disulfide bridge links Cys-255 with Cys-279. His-281 serves as the catalytic Charge relay system. 3 cysteine pairs are disulfide-bonded: Cys-303-Cys-314, Cys-317-Cys-322, and Cys-451-Cys-467. The region spanning 356–467 (WRYRVSLTFS…EDILLTLLPC (112 aa)) is the PLAT domain.

The protein belongs to the AB hydrolase superfamily. Lipase family. Expressed in female, but not in male, lacrimal gland. Expressed in male and female sublingual gland and pancreas.

Its subcellular location is the secreted. Functionally, may function as inhibitor of dietary triglyceride digestion. Lacks detectable lipase activity (in vitro). In Mus musculus (Mouse), this protein is Inactive pancreatic lipase-related protein 1 (Pnliprp1).